The following is a 201-amino-acid chain: Probable nicotinate-nucleotide adenylyltransferase (201 aa).

The protein belongs to the NadD family.

It carries out the reaction nicotinate beta-D-ribonucleotide + ATP + H(+) = deamido-NAD(+) + diphosphate. It functions in the pathway cofactor biosynthesis; NAD(+) biosynthesis; deamido-NAD(+) from nicotinate D-ribonucleotide: step 1/1. In terms of biological role, catalyzes the reversible adenylation of nicotinate mononucleotide (NaMN) to nicotinic acid adenine dinucleotide (NaAD). This is Probable nicotinate-nucleotide adenylyltransferase from Neisseria gonorrhoeae (strain ATCC 700825 / FA 1090).